Consider the following 396-residue polypeptide: METFFTSESVSEGHPDKLCDQISDAVLDACLSQDPHSCVACETFASTSLILIGGEISTRAHINLTQIARDVAADIGYVSADVGLDAASMAVLDMTHHQSPDIAQGVHGAGLKEFAGSQGAGDQGIMFGFACRETPEFMPAPLMCAHAVVRYAATLRHERRVPWLRPDAKSQVTVQYEGHRPVRISAVVFSQQHDPSPSYETIRETLIEEIVRPALAPTGLLDENTRFFINPTGRFVIGGPFGDTGLTGRKIIVDTYGGMGRHGGGSFSGKDASKVDRSAAYMARYIAKNIVAADLAERCEVQLAYAIGVPYPVSLRIETFGTARASESHITHAVKEIFDLTPAGIVRTLDLCAPRYRSTAVYGHFGREQFPWERTDCVCDLQRAVRPFALSGQIKE.

H14 contacts ATP. D16 is a binding site for Mg(2+). Position 42 (E42) interacts with K(+). Residues E55 and Q98 each contribute to the L-methionine site. The flexible loop stretch occupies residues 98–108 (QSPDIAQGVHG). Residues 167-169 (DAK), 234-235 (RF), D243, 249-250 (RK), S266, and K270 contribute to the ATP site. L-methionine is bound at residue D243. K274 contacts L-methionine.

The protein belongs to the AdoMet synthase family. As to quaternary structure, homotetramer; dimer of dimers. Mg(2+) is required as a cofactor. Requires K(+) as cofactor.

The protein localises to the cytoplasm. The catalysed reaction is L-methionine + ATP + H2O = S-adenosyl-L-methionine + phosphate + diphosphate. It functions in the pathway amino-acid biosynthesis; S-adenosyl-L-methionine biosynthesis; S-adenosyl-L-methionine from L-methionine: step 1/1. Functionally, catalyzes the formation of S-adenosylmethionine (AdoMet) from methionine and ATP. The overall synthetic reaction is composed of two sequential steps, AdoMet formation and the subsequent tripolyphosphate hydrolysis which occurs prior to release of AdoMet from the enzyme. In Treponema pallidum (strain Nichols), this protein is S-adenosylmethionine synthase.